A 239-amino-acid polypeptide reads, in one-letter code: Ribosomal RNA small subunit methyltransferase G (239 aa).

Residues Gly-77, Phe-82, 128 to 129 (AE), and Arg-147 each bind S-adenosyl-L-methionine. The tract at residues 216 to 239 (KKQSQTPKKFPRKPGTPNKSPIEG) is disordered.

Belongs to the methyltransferase superfamily. RNA methyltransferase RsmG family.

Its subcellular location is the cytoplasm. In terms of biological role, specifically methylates the N7 position of guanine in position 535 of 16S rRNA. This Bacillus licheniformis (strain ATCC 14580 / DSM 13 / JCM 2505 / CCUG 7422 / NBRC 12200 / NCIMB 9375 / NCTC 10341 / NRRL NRS-1264 / Gibson 46) protein is Ribosomal RNA small subunit methyltransferase G.